Here is a 78-residue protein sequence, read N- to C-terminus: Putative antitoxin PF1222 (78 aa).

Belongs to the UPF0330 family.

Its function is as follows. Possibly the antitoxin component of a type II toxin-antitoxin (TA) system. The protein is Putative antitoxin PF1222 of Pyrococcus furiosus (strain ATCC 43587 / DSM 3638 / JCM 8422 / Vc1).